An 850-amino-acid chain; its full sequence is Transforming growth factor beta receptor type 3 (850 aa).

Residues M1 to A22 form the signal peptide. At G23–T785 the chain is on the extracellular side. C54 and C199 are disulfide-bonded. N-linked (GlcNAc...) asparagine glycosylation is found at N143 and N491. The ZP domain occupies K454 to C728. The interval S528–E557 is disordered. Residues S533 and S544 are each glycosylated (O-linked (Xyl...) (glycosaminoglycan) serine). N-linked (GlcNAc...) asparagine glycans are attached at residues N570, N589, and N696. Disulfide bonds link C638-C704, C659-C728, and C709-C721. Positions M735–P749 are interaction with TGF-beta ligand. The helical transmembrane segment at V786–Y808 threads the bilayer. Residues S809–A850 lie on the Cytoplasmic side of the membrane. Residues R817 to A833 are compositionally biased toward polar residues. The tract at residues R817 to A850 is disordered. The segment covering S835–A850 has biased composition (low complexity). At T839 the chain carries Phosphothreonine.

In terms of assembly, forms homodimers and homooligomers. Interacts with DYNLT4. Interacts with integrin ITGA5:ITGB1; this interaction promotes the internalization and trafficking of ITGA5:ITGB1 into endocytic vesicles. Interacts with TGFB1, BMP2, BMP5, BMP7 or GDF5 and inhibin A via the ligand binding domains. Interacts with ALK3/BMPR1A; this interaction results in the cell surface retention of BMPR1A. Interacts with ALK6/BMPR1B; this interaction enhances BMPR1B-mediated stimulation of the BMP signaling pathway. Interacts with the scaffolding protein beta-arrestin2/ARRB2; this interaction mediates internalization of TGFBR3 and thus regulates migration, actin cytoskeleton and activation of CDC42. Post-translationally, extensively modified by glycosaminoglycan groups (GAG). Phosphorylated in the cytoplasmic domain by the type II receptor TGFBR2 at THR-839 to mediate recruitment of ARRB2 and subsequent internalization of TGFBR2 and TGFBR3.

The protein resides in the cell membrane. It localises to the secreted. The protein localises to the extracellular space. It is found in the extracellular matrix. Cell surface receptor that regulates diverse cellular processes including cell proliferation, differentiation, migration, and apoptosis. Initiates BMP, inhibin, and TGF-beta signaling pathways by interacting with different ligands including TGFB1, BMP2, BMP5, BMP7 or GDF5. Alternatively, acts as a cell surface coreceptor for BMP ligands, serving to enhance ligand binding by differentially regulating BMPR1A/ALK3 and BMPR1B/ALK6 receptor trafficking. Promotes epithelial cell adhesion, focal adhesion formation and integrin signaling during epithelial cell spreading on fibronectin. By interacting with the scaffolding protein beta-arrestin2/ARRB2, regulates migration or actin cytoskeleton and promotes the activation of CDC42 as well as the inhibition of NF-kappa-B. In gonadotrope cells, acts as an inhibin A coreceptor and regulates follicle-stimulating hormone (FSH) levels and female fertility. Plays a role in the inhibition of directed and random cell migration in epithelial cells by altering the actin cytoskeletal organization. Participates in epithelial-mesenchymal transformation (EMT) upon binding to BMP2 or TGFB2, by activating the PAR6/SMURF1/RHOA pathway. The polypeptide is Transforming growth factor beta receptor type 3 (Tgfbr3) (Mus musculus (Mouse)).